A 333-amino-acid chain; its full sequence is Ketoreductase sphI (333 aa).

Residue Tyr167 participates in NADP(+) binding.

The protein belongs to the NAD(P)-dependent epimerase/dehydratase family. Dihydroflavonol-4-reductase subfamily.

Ketoreductase; part of the gene cluster that mediates the biosynthesis of sphingofungins, bioactive molecules acting as sphingolipid inhibitors via inhibiting serine palmitoyl transferase (SPT). Does not seem to be involved in any biosynthetic process leading to the production of sphingofungins, but might be connected to a regulation or resistance mechanism. This Aspergillus fumigatus (strain CBS 144.89 / FGSC A1163 / CEA10) (Neosartorya fumigata) protein is Ketoreductase sphI.